An 859-amino-acid polypeptide reads, in one-letter code: Envelope glycoprotein gp160 (859 aa).

The N-terminal stretch at 1–24 (MCGRNQLFVASLLASACLIYCVQY) is a signal peptide. Over 25–673 (VTVFYGVPVW…LTSWIKYIQY (649 aa)) the chain is Extracellular. N-linked (GlcNAc...) asparagine; by host glycosylation occurs at N36. A disulfide bridge links C43 with C56. N-linked (GlcNAc...) asparagine; by host glycans are attached at residues N69, N78, N113, N119, N131, N137, N145, N160, N173, N186, N200, N232, N235, N242, N266, N272, N283, N294, N304, N359, N392, N402, N405, N442, N457, and N460. 5 disulfides stabilise this stretch: C100-C208, C107-C199, C112-C157, C221-C251, and C231-C243. The tract at residues 112–156 (CNSTTAKNTTSTPTTTTTANTTIGENSSCIRTDNCTGLGEEEMVD) is V1. Positions 157–199 (CQFNMTGLERDKKKLYNETWYSKDVVCESNDTKKEKTCYMNHC) are V2. Residues 299 to 331 (CKRPGNKTVVPITLMSGLVFHSQPINRRPRQAW) form a V3 region. A disulfide bridge links C299 with C332. Cystine bridges form between C384–C441 and C391–C414. Positions 391–414 (CNMTWFLNWVENRTNQTQHNYVPC) are V4. The tract at residues 457 to 463 (NQTNITF) is V5. Residues 506–526 (GVFVLGFLGFLTTAGAAMGAA) are fusion peptide. The immunosuppression stretch occupies residues 569 to 585 (LQARVTAIEKYLKDQAQ). 3 N-linked (GlcNAc...) asparagine; by host glycosylation sites follow: N605, N614, and N630. Residues 614-646 (NMTWQEWEQRIRNLEANISESLEQAQIQQEKNM) are a coiled coil. Positions 651–672 (KLNSWDVFGNWFDLTSWIKYIQ) are MPER; binding to GalCer. The chain crosses the membrane as a helical span at residues 674–694 (GVYIVVGIIVLRIVIYVVQML). Residues 695-859 (SRLRKGYRPV…IRQGAEIALL (165 aa)) lie on the Cytoplasmic side of the membrane. The YXXV motif; contains endocytosis signal signature appears at 701-704 (YRPV). Residue C767 is the site of S-palmitoyl cysteine; by host attachment. The Di-leucine internalization motif motif lies at 858-859 (LL).

The mature envelope protein (Env) consists of a homotrimer of non-covalently associated gp120-gp41 heterodimers. The resulting complex protrudes from the virus surface as a spike. There seems to be as few as 10 spikes on the average virion. Interacts with human CD4, CCR5 and CXCR4, to form a P4HB/PDI-CD4-CXCR4-gp120 complex. Gp120 also interacts with the C-type lectins CD209/DC-SIGN and CLEC4M/DC-SIGNR (collectively referred to as DC-SIGN(R)). Gp120 and gp41 interact with GalCer. As to quaternary structure, the mature envelope protein (Env) consists of a homotrimer of non-covalently associated gp120-gp41 heterodimers. The resulting complex protrudes from the virus surface as a spike. There seems to be as few as 10 spikes on the average virion. Post-translationally, specific enzymatic cleavages in vivo yield mature proteins. Envelope glycoproteins are synthesized as an inactive precursor that is heavily N-glycosylated and processed likely by host cell furin in the Golgi to yield the mature SU and TM proteins. The cleavage site between SU and TM requires the minimal sequence [KR]-X-[KR]-R. In terms of processing, palmitoylation of the transmembrane protein and of Env polyprotein (prior to its proteolytic cleavage) is essential for their association with host cell membrane lipid rafts. Palmitoylation is therefore required for envelope trafficking to classical lipid rafts, but not for viral replication.

It localises to the virion membrane. The protein resides in the host cell membrane. It is found in the host endosome membrane. Its function is as follows. The surface protein gp120 (SU) attaches the virus to the host lymphoid cell by binding to the primary receptor CD4. This interaction induces a structural rearrangement creating a high affinity binding site for a chemokine coreceptor like CXCR4 and/or CCR5. This peculiar 2 stage receptor-interaction strategy allows gp120 to maintain the highly conserved coreceptor-binding site in a cryptic conformation, protected from neutralizing antibodies. Since CD4 also displays a binding site for the disulfide-isomerase P4HB/PDI, a P4HB/PDI-CD4-CXCR4-gp120 complex may form. In that complex, P4HB/PDI could reach and reduce gp120 disulfide bonds, causing major conformational changes in gp120. TXN, another PDI family member could also be involved in disulfide rearrangements in Env during fusion. These changes are transmitted to the transmembrane protein gp41 and are thought to activate its fusogenic potential by unmasking its fusion peptide. Functionally, the surface protein gp120 is a ligand for CD209/DC-SIGN and CLEC4M/DC-SIGNR, which are respectively found on dendritic cells (DCs), and on endothelial cells of liver sinusoids and lymph node sinuses. These interactions allow capture of viral particles at mucosal surfaces by these cells and subsequent transmission to permissive cells. DCs are professional antigen presenting cells, critical for host immunity by inducing specific immune responses against a broad variety of pathogens. They act as sentinels in various tissues where they take up antigen, process it, and present it to T-cells following migration to lymphoid organs. HIV subverts the migration properties of dendritic cells to gain access to CD4+ T-cells in lymph nodes. Virus transmission to permissive T-cells occurs either in trans (without DCs infection, through viral capture and transmission), or in cis (following DCs productive infection, through the usual CD4-gp120 interaction), thereby inducing a robust infection. In trans infection, bound virions remain infectious over days and it is proposed that they are not degraded, but protected in non-lysosomal acidic organelles within the DCs close to the cell membrane thus contributing to the viral infectious potential during DCs' migration from the periphery to the lymphoid tissues. On arrival at lymphoid tissues, intact virions recycle back to DCs' cell surface allowing virus transmission to CD4+ T-cells. Virion capture also seems to lead to MHC-II-restricted viral antigen presentation, and probably to the activation of HIV-specific CD4+ cells. In terms of biological role, the transmembrane protein gp41 (TM) acts as a class I viral fusion protein. Under the current model, the protein has at least 3 conformational states: pre-fusion native state, pre-hairpin intermediate state, and post-fusion hairpin state. During fusion of viral and target intracellular membranes, the coiled coil regions (heptad repeats) assume a trimer-of-hairpins structure, positioning the fusion peptide in close proximity to the C-terminal region of the ectodomain. The formation of this structure appears to drive apposition and subsequent fusion of viral and target cell membranes. Complete fusion occurs in host cell endosomes and is dynamin-dependent, however some lipid transfer might occur at the plasma membrane. The virus undergoes clathrin-dependent internalization long before endosomal fusion, thus minimizing the surface exposure of conserved viral epitopes during fusion and reducing the efficacy of inhibitors targeting these epitopes. Membranes fusion leads to delivery of the nucleocapsid into the cytoplasm. The envelope glycoprotein gp160 precursor down-modulates cell surface CD4 antigen by interacting with it in the endoplasmic reticulum and blocking its transport to the cell surface. Its function is as follows. The gp120-gp41 heterodimer seems to contribute to T-cell depletion during HIV-1 infection. The envelope glycoproteins expressed on the surface of infected cells induce apoptosis through an interaction with uninfected cells expressing the receptor (CD4) and the coreceptors CXCR4 or CCR5. This type of bystander killing may be obtained by at least three distinct mechanisms. First, the interaction between the 2 cells can induce cellular fusion followed by nuclear fusion within the syncytium. Syncytia are condemned to die from apoptosis. Second, the 2 interacting cells may not fuse entirely and simply exchange plasma membrane lipids, after a sort of hemifusion process, followed by rapid death. Third, it is possible that virus-infected cells, on the point of undergoing apoptosis, fuse with CD4-expressing cells, in which case apoptosis is rapidly transmitted from one cell to the other and thus occurs in a sort of contagious fashion. Functionally, the gp120-gp41 heterodimer allows rapid transcytosis of the virus through CD4 negative cells such as simple epithelial monolayers of the intestinal, rectal and endocervical epithelial barriers. Both gp120 and gp41 specifically recognize glycosphingolipids galactosyl-ceramide (GalCer) or 3' sulfo-galactosyl-ceramide (GalS) present in the lipid rafts structures of epithelial cells. Binding to these alternative receptors allows the rapid transcytosis of the virus through the epithelial cells. This transcytotic vesicle-mediated transport of virions from the apical side to the basolateral side of the epithelial cells does not involve infection of the cells themselves. This is Envelope glycoprotein gp160 (env) from Homo sapiens (Human).